The chain runs to 314 residues: Endo-beta-N-acetylglucosaminidase (314 aa).

A signal peptide spans 1–47; that stretch reads MQFGIVAAIADGGRTARAGGSVRPPRRPPASHTAWGLPRGRPTGQPH. A disordered region spans residues 14-54; the sequence is RTARAGGSVRPPRRPPASHTAWGLPRGRPTGQPHATPTKSG. Positions 55 to 309 constitute a GH18 domain; the sequence is PTSIAYVEVN…SSMTKVLYGQ (255 aa). Residue Glu175 is the Proton donor of the active site.

It belongs to the glycosyl hydrolase 18 family. As to quaternary structure, monomer.

Its subcellular location is the secreted. The enzyme catalyses an N(4)-(oligosaccharide-(1-&gt;3)-[oligosaccharide-(1-&gt;6)]-beta-D-Man-(1-&gt;4)-beta-D-GlcNAc-(1-&gt;4)-alpha-D-GlcNAc)-L-asparaginyl-[protein] + H2O = an oligosaccharide-(1-&gt;3)-[oligosaccharide-(1-&gt;6)]-beta-D-Man-(1-&gt;4)-D-GlcNAc + N(4)-(N-acetyl-beta-D-glucosaminyl)-L-asparaginyl-[protein]. Functionally, cleaves asparagine-linked oligomannose and hybrid, but not complex, oligosaccharides from glycoproteins. The chain is Endo-beta-N-acetylglucosaminidase from Flavobacterium sp. (strain SK1022).